A 412-amino-acid chain; its full sequence is Peptidase T (412 aa).

H83 contributes to the Zn(2+) binding site. D85 is an active-site residue. Residue D145 coordinates Zn(2+). E179 (proton acceptor) is an active-site residue. Residues E180, D202, and H384 each coordinate Zn(2+).

Belongs to the peptidase M20B family. Zn(2+) serves as cofactor.

It is found in the cytoplasm. The enzyme catalyses Release of the N-terminal residue from a tripeptide.. Functionally, cleaves the N-terminal amino acid of tripeptides. This Fusobacterium nucleatum subsp. nucleatum (strain ATCC 25586 / DSM 15643 / BCRC 10681 / CIP 101130 / JCM 8532 / KCTC 2640 / LMG 13131 / VPI 4355) protein is Peptidase T.